The sequence spans 589 residues: MLHLHHSCLCFRSWLPAMLAVLLSLAPSASSDISASRPNILLLMADDLGIGDIGCYGNNTMRTPNIDRLAEDGVKLTQHISAASLCTPSRAAFLTGRYPVRSGMVSSIGYRVLQWTGASGGLPTNETTFAKILKEKGYATGLIGKWHLGLNCESASDHCHHPLHHGFDHFYGMPFSLMGDCARWELSEKRVNLEQKLNFLFQVLALVALTLVAGKLTHLIPVSWMPVIWSALSAVLLLASSYFVGALIVHADCFLMRNHTITEQPMCFQRTTPLILQEVASFLKRNKHGPFLLFVSFLHVHIPLITMENFLGKSLHGLYGDNVEEMDWMVGRILDTLDVEGLSNSTLIYFTSDHGGSLENQLGNTQYGGWNGIYKGGKGMGGWEGGIRVPGIFRWPGVLPAGRVIGEPTSLMDVFPTVVRLAGGEVPQDRVIDGQDLLPLLLGTAQHSDHEFLMHYCERFLHAARWHQRDRGTMWKVHFVTPVFQPEGAGACYGRKVCPCFGEKVVHHDPPLLFDLSRDPSETHILTPASEPVFYQVMERVQQAVWEHQRTLSPVPLQLDRLGNIWRPWLQPCCGPFPLCWCLREDDPQ.

A signal peptide spans 1–31 (MLHLHHSCLCFRSWLPAMLAVLLSLAPSASS). 2 residues coordinate Ca(2+): Asp46 and Asp47. Residue Asn58 is glycosylated (N-linked (GlcNAc...) asparagine). Cys86 is a Ca(2+) binding site. The active-site Nucleophile is Cys86. Cys86 carries the post-translational modification 3-oxoalanine (Cys). Asn125 carries an N-linked (GlcNAc...) asparagine glycan. Residue Lys145 participates in substrate binding. The active site involves His147. Residue Asn258 is glycosylated (N-linked (GlcNAc...) asparagine). Substrate is bound at residue His301. A glycan (N-linked (GlcNAc...) asparagine) is linked at Asn344. Positions 353 and 354 each coordinate Ca(2+). Lys378 serves as a coordination point for substrate.

This sequence belongs to the sulfatase family. Ca(2+) serves as cofactor. N-glycosylated. Post-translationally, the conversion to 3-oxoalanine (also known as C-formylglycine, FGly), of a serine or cysteine residue in prokaryotes and of a cysteine residue in eukaryotes, is critical for catalytic activity. As to expression, expressed in the pancreas, liver and kidney.

The protein resides in the golgi apparatus. Its subcellular location is the golgi stack. The enzyme catalyses an aryl sulfate + H2O = a phenol + sulfate + H(+). Its activity is regulated as follows. Inhibited by millimolar concentrations of warfarin. Functionally, exhibits arylsulfatase activity towards the artificial substrate 4-methylumbelliferyl sulfate. May be essential for the correct composition of cartilage and bone matrix during development. Has no activity toward steroid sulfates. The protein is Arylsulfatase L of Homo sapiens (Human).